Reading from the N-terminus, the 387-residue chain is Proline-rich protein 5 (387 aa).

Interaction with RICTOR regions lie at residues 10-96 (MSSP…LTKG) and 189-219 (HESR…YGLY). Residues 11 to 33 (SSPSLSDLGKREPGAAGADERGT) are disordered. Positions 18-33 (LGKREPGAAGADERGT) are enriched in basic and acidic residues. Ser253 bears the Phosphoserine mark. Disordered regions lie at residues 262–347 (NPVA…PETL) and 365–387 (DFGR…PSVV). The span at 310–321 (SSPSPHSGPCPS) shows a compositional bias: low complexity. Residue Ser373 is modified to Phosphoserine.

The protein belongs to the PROTOR family. In terms of assembly, associated component of the mechanistic target of rapamycin complex 2 (mTORC2). Binds directly to MTOR and RICTOR within the TORC2 complex.

In terms of biological role, associated subunit of mTORC2, which regulates cell growth and survival in response to hormonal signals. mTORC2 is activated by growth factors, but, in contrast to mTORC1, seems to be nutrient-insensitive. mTORC2 seems to function upstream of Rho GTPases to regulate the actin cytoskeleton, probably by activating one or more Rho-type guanine nucleotide exchange factors. PRR5 plays an important role in regulation of PDGFRB expression and in modulation of platelet-derived growth factor signaling. May act as a tumor suppressor in breast cancer. This is Proline-rich protein 5 from Rattus norvegicus (Rat).